We begin with the raw amino-acid sequence, 235 residues long: Glycerol-3-phosphate acyltransferase (235 aa).

The next 6 helical transmembrane spans lie at 4–24 (LLAI…LVAG), 56–76 (VVTL…VAFF), 94–114 (LLAG…GFKG), 122–142 (AGML…IFLL), 152–172 (VASM…KYIF), and 191–211 (FHDS…LAIL).

It belongs to the PlsY family. As to quaternary structure, probably interacts with PlsX.

The protein resides in the cell inner membrane. It carries out the reaction an acyl phosphate + sn-glycerol 3-phosphate = a 1-acyl-sn-glycero-3-phosphate + phosphate. It functions in the pathway lipid metabolism; phospholipid metabolism. Catalyzes the transfer of an acyl group from acyl-phosphate (acyl-PO(4)) to glycerol-3-phosphate (G3P) to form lysophosphatidic acid (LPA). This enzyme utilizes acyl-phosphate as fatty acyl donor, but not acyl-CoA or acyl-ACP. This Pelodictyon phaeoclathratiforme (strain DSM 5477 / BU-1) protein is Glycerol-3-phosphate acyltransferase.